The following is a 130-amino-acid chain: MLKTLPPTLREKKRYVALEIIYEMELSQKDVISVVRNALLNYSGVLGCSRTNPWLIDYGHPYGILRISREEVDTLRSSLSLMGEHKKKPINIRIIGISNSVKHIREKFLHVPHEPYYKVIQKLKRKGPKK.

This sequence belongs to the eukaryotic/archaeal RNase P protein component 2 family. Consists of a catalytic RNA component and at least 5 protein subunits.

It is found in the cytoplasm. It catalyses the reaction Endonucleolytic cleavage of RNA, removing 5'-extranucleotides from tRNA precursor.. Functionally, part of ribonuclease P, a protein complex that generates mature tRNA molecules by cleaving their 5'-ends. This is Ribonuclease P protein component 2 from Methanococcus maripaludis (strain DSM 14266 / JCM 13030 / NBRC 101832 / S2 / LL).